We begin with the raw amino-acid sequence, 966 residues long: Alpha-1,4 glucan phosphorylase L-1 isozyme, chloroplastic/amyloplastic (966 aa).

A chloroplast-targeting transit peptide spans 1–50; sequence MATANGAHLFNHYSSNSRFIHFTSRNTSSKLFLTKTSHFRRPKRCFHVNN. Lys812 carries the N6-(pyridoxal phosphate)lysine modification.

It belongs to the glycogen phosphorylase family. Requires pyridoxal 5'-phosphate as cofactor. Tuber.

The protein resides in the plastid. It is found in the chloroplast. Its subcellular location is the amyloplast. The catalysed reaction is [(1-&gt;4)-alpha-D-glucosyl](n) + phosphate = [(1-&gt;4)-alpha-D-glucosyl](n-1) + alpha-D-glucose 1-phosphate. Phosphorylase is an important allosteric enzyme in carbohydrate metabolism. Enzymes from different sources differ in their regulatory mechanisms and in their natural substrates. However, all known phosphorylases share catalytic and structural properties. The protein is Alpha-1,4 glucan phosphorylase L-1 isozyme, chloroplastic/amyloplastic of Solanum tuberosum (Potato).